The sequence spans 2203 residues: Voltage-dependent L-type calcium channel subunit alpha-1D (2203 aa).

Disordered stretches follow at residues 1 to 51 and 64 to 100; these read MMMM…QTVL and KAAQTMSTSAPPPVGSLSQRKRQQYAKSKKQGNSSNS. Residues 1–126 lie on the Cytoplasmic side of the membrane; the sequence is MMMMMMMKKM…RACISIVDWK (126 aa). Residues 38 to 51 are compositionally biased toward polar residues; it reads GPTSQPNSSKQTVL. Positions 82–93 are enriched in basic residues; that stretch reads QRKRQQYAKSKK. The stretch at 112-408 is one I repeat; that stretch reads NNPIRRACIS…NLVLGVLSGE (297 aa). A helical membrane pass occupies residues 127-145; the sequence is PFDIFILLAIFANCVALAI. The Extracellular portion of the chain corresponds to 146-163; that stretch reads YIPFPEDDSNSTNHNLEK. A glycan (N-linked (GlcNAc...) asparagine) is linked at Asn155. A helical transmembrane segment spans residues 164–183; the sequence is VEYAFLIIFTVETFLKIIAS. Topologically, residues 184–195 are cytoplasmic; it reads GLLLHPNASVRN. The helical transmembrane segment at 196–214 threads the bilayer; that stretch reads GWNLLDFVIVIVGLFSVIL. The Extracellular segment spans residues 215–235; the sequence is EQLTKETEGGNHSSGKSGGFD. Asn225 is a glycosylation site (N-linked (GlcNAc...) asparagine). The chain crosses the membrane as a helical span at residues 236–254; that stretch reads VKALRAFRVLRPLRLVSGV. Over 255–273 the chain is Cytoplasmic; sequence PSLQVVLNSIIKAMVPLLH. Residues 274 to 293 form a helical membrane-spanning segment; that stretch reads IALLVLFVIIIYAIIGLELF. The Extracellular portion of the chain corresponds to 294-381; it reads IGKMHKTCFF…WVNDAIGWEW (88 aa). Asn329 is a glycosylation site (N-linked (GlcNAc...) asparagine). Residue Glu364 participates in Ca(2+) binding. Residues 382 to 406 traverse the membrane as a helical segment; sequence PWVYFVSLIILGSFFVLNLVLGVLS. The Cytoplasmic portion of the chain corresponds to 407 to 582; it reads GEFSKEREKA…RRCRAAVKSV (176 aa). Positions 429–446 are binding to the beta subunit; that stretch reads QQLEEDLKGYLDWITQAE. The interval 449–480 is disordered; that stretch reads DPENEEEGGEEGKRNTSMPTSETESVNTENVS. Polar residues predominate over residues 463–479; the sequence is NTSMPTSETESVNTENV. The II repeat unit spans residues 528 to 774; that stretch reads EALCVCRCSL…DWNAVMYDGI (247 aa). Residues 583–602 traverse the membrane as a helical segment; the sequence is TFYWLVIVLVFLNTLTISSE. At 603–617 the chain is on the extracellular side; the sequence is HYNQPDWLTQIQDIA. The chain crosses the membrane as a helical span at residues 618 to 636; the sequence is NKVLLALFTCEMLVKMYSL. At 637-644 the chain is on the cytoplasmic side; it reads GLQAYFVS. The helical transmembrane segment at 645–663 threads the bilayer; that stretch reads LFNRFDCFVVCGGITETIL. The Extracellular segment spans residues 664–673; sequence VELELMSPLG. The chain crosses the membrane as a helical span at residues 674–692; sequence VSVFRCVRLLRIFKVTRHW. Residues 693–711 are Cytoplasmic-facing; it reads TSLSNLVASLLNSMKSIAS. A helical membrane pass occupies residues 712-732; the sequence is LLLLLFLFIIIFSLLGMQLFG. Residues 733 to 786 lie on the Extracellular side of the membrane; it reads GKFNFDETQTKRSTFDNFPQALLTVFQILTGEDWNAVMYDGIMAYGGPSSSGMI. Glu764 is a Ca(2+) binding site. Residues 787 to 811 traverse the membrane as a helical segment; sequence VCIYFIILFICGNYILLKLFLAIAV. At 812–945 the chain is on the cytoplasmic side; the sequence is DNLADAESLN…VGCHKLINHH (134 aa). Positions 822 to 909 are disordered; it reads TAQKEEAEEK…AGPRPRRISE (88 aa). Basic and acidic residues predominate over residues 824 to 849; it reads QKEEAEEKERKKIARKESLENKKNNK. Over residues 850–861 the composition is skewed to polar residues; the sequence is PEVNQIANSDNK. A compositionally biased stretch (acidic residues) spans 884–897; the sequence is VGEEEEEEEEDEPE. Residues 892–1174 form an III repeat; the sequence is EEDEPEVPAG…LLYKAIDSNG (283 aa). A helical membrane pass occupies residues 946 to 964; sequence IFTNLILVFIMLSSAALAA. Topologically, residues 965-980 are extracellular; the sequence is EDPIRSHSFRNTILGY. A helical transmembrane segment spans residues 981–1000; that stretch reads FDYAFTAIFTVEILLKMTTF. The Cytoplasmic portion of the chain corresponds to 1001–1012; sequence GAFLHKGAFCRN. The helical transmembrane segment at 1013 to 1031 threads the bilayer; sequence YFNLLDMLVVGVSLVSFGI. Residues 1032-1037 lie on the Extracellular side of the membrane; sequence QSSAIS. Residues 1038 to 1057 traverse the membrane as a helical segment; the sequence is VVKILRVLRVLRPLRAINRA. The Cytoplasmic segment spans residues 1058-1076; the sequence is KGLKHVVQCVFVAIRTIGN. A helical membrane pass occupies residues 1077-1096; the sequence is IMIVTTLLQFMFACIGVQLF. The Extracellular segment spans residues 1097-1186; that stretch reads KGKFYRCTDE…VGPVYNYRVE (90 aa). The dihydropyridine binding stretch occupies residues 1134 to 1224; it reads RIWQNSDFNF…QEQGEKEYKN (91 aa). Ca(2+) is bound at residue Glu1160. A helical transmembrane segment spans residues 1187–1207; it reads ISIFFIIYIIIVAFFMMNIFV. Topologically, residues 1208-1264 are cytoplasmic; it reads GFVIVTFQEQGEKEYKNCELDKNQRQCVEYALKARPLRRYIPKNPYQYKFWYVVNSS. Residues 1211-1486 form an IV repeat; that stretch reads IVTFQEQGEK…YTCGSNFAIV (276 aa). The chain crosses the membrane as a helical span at residues 1265–1283; it reads PFEYMMFVLIMLNTLCLAM. The Extracellular segment spans residues 1284-1298; the sequence is QHYEQSKMFNDAMDI. The helical transmembrane segment at 1299 to 1318 threads the bilayer; sequence LNMVFTGVFTVEMVLKVIAF. Residues 1319–1325 are Cytoplasmic-facing; sequence KPKGYFS. The helical transmembrane segment at 1326–1347 threads the bilayer; it reads DAWNTFDSLIVIGSIIDVALSE. Residues 1348-1357 lie on the Extracellular side of the membrane; that stretch reads ADNSEESNRI. A helical transmembrane segment spans residues 1358 to 1377; that stretch reads SITFFRLFRVMRLVKLLSRG. The Cytoplasmic segment spans residues 1378–1396; that stretch reads EGIRTLLWTFIKSFQALPY. Residues 1397–1416 form a helical membrane-spanning segment; that stretch reads VALLIAMLFFIYAVIGMQMF. The Extracellular segment spans residues 1417-1483; that stretch reads GKVAMRDNNQ…GEEYTCGSNF (67 aa). The segment at 1464-1530 is dihydropyridine binding; that stretch reads LCDPDSDYNP…LGPHHLDEFK (67 aa). The segment at 1476–1519 is phenylalkylamine binding; sequence EYTCGSNFAIVYFISFYMLCAFLIINLFVAVIMDNFDYLTRDWS. Residues 1484-1508 form a helical membrane-spanning segment; sequence AIVYFISFYMLCAFLIINLFVAVIM. Residues 1509 to 2203 are Cytoplasmic-facing; it reads DNFDYLTRDW…ADEMICITTL (695 aa). 4 disordered regions span residues 1734–1766, 1795–1816, 1920–1963, and 2176–2195; these read NHVNSDRRESLQQTNTTHRPLHVQRPSIPPASD, TSTNANLNNANMSKAAHGKRPS, FERP…HRRS, and GPGYSDEEPDPGREEEDLAD. Over residues 1795–1806 the composition is skewed to polar residues; that stretch reads TSTNANLNNANM. Residues 2180-2195 show a composition bias toward acidic residues; sequence SDEEPDPGREEEDLAD.

This sequence belongs to the calcium channel alpha-1 subunit (TC 1.A.1.11) family. CACNA1D subfamily. Voltage-dependent calcium channels are multisubunit complexes, consisting of alpha-1, alpha-2, beta and delta subunits in a 1:1:1:1 ratio. The channel activity is directed by the pore-forming and voltage-sensitive alpha-1 subunit. In many cases, this subunit is sufficient to generate voltage-sensitive calcium channel activity. The auxiliary subunits beta and alpha-2/delta linked by a disulfide bridge regulate the channel activity. Interacts with CABP1 and CABP4, resulting in a near elimination of calcium-dependent inactivation of the channel. Interacts with RIMBP2. In terms of tissue distribution, expressed in brain, pancreatic islets and B-lymphocytes.

The protein resides in the membrane. The enzyme catalyses Ca(2+)(in) = Ca(2+)(out). Voltage-sensitive calcium channels (VSCC) mediate the entry of calcium ions into excitable cells and are also involved in a variety of calcium-dependent processes, including muscle contraction, hormone or neurotransmitter release, gene expression, cell motility, cell division and cell death. The isoform alpha-1D gives rise to L-type calcium currents. Long-lasting (L-type) calcium channels belong to the 'high-voltage activated' (HVA) group. They are blocked by dihydropyridines (DHP), phenylalkylamines, and by benzothiazepines. Functionally, voltage-sensitive calcium channels (VSCC) mediate the entry of calcium ions into excitable cells and are also involved in a variety of calcium-dependent processes, including muscle contraction, hormone or neurotransmitter release, gene expression, cell motility, cell division and cell death. The isoform alpha-1D gives rise to L-type calcium currents. This chain is Voltage-dependent L-type calcium channel subunit alpha-1D (Cacna1d), found in Rattus norvegicus (Rat).